We begin with the raw amino-acid sequence, 357 residues long: Histidinol-phosphate aminotransferase (357 aa).

Lys212 is subject to N6-(pyridoxal phosphate)lysine.

It belongs to the class-II pyridoxal-phosphate-dependent aminotransferase family. Histidinol-phosphate aminotransferase subfamily. Homodimer. Pyridoxal 5'-phosphate is required as a cofactor.

It carries out the reaction L-histidinol phosphate + 2-oxoglutarate = 3-(imidazol-4-yl)-2-oxopropyl phosphate + L-glutamate. It participates in amino-acid biosynthesis; L-histidine biosynthesis; L-histidine from 5-phospho-alpha-D-ribose 1-diphosphate: step 7/9. The protein is Histidinol-phosphate aminotransferase of Pectobacterium carotovorum subsp. carotovorum (strain PC1).